The following is a 234-amino-acid chain: Transcription factor ILR3 (234 aa).

A disordered region spans residues 34-85 (QPIGVSSNSSAGVDGSAGNSEASKEPGSKKRGRCESSSATSSKACREKQRRD). A compositionally biased stretch (polar residues) spans 36–54 (IGVSSNSSAGVDGSAGNSE). One can recognise a bHLH domain in the interval 71 to 122 (SATSSKACREKQRRDRLNDKFMELGAILEPGNPPKTDKAAILVDAVRMVTQL).

As to quaternary structure, homodimer. Interacts with BTS and BHLH47/PYE. In terms of tissue distribution, widely expressed throughout development, mostly in vasculatures.

It is found in the nucleus. Its function is as follows. Transcription factor. Plays a role in resistance to amide-linked indole-3-acetic acid (IAA) conjugates such as IAA-Leu and IAA-Phe. May regulate gene expression in response to metal homeostasis changes. The sequence is that of Transcription factor ILR3 (ILR3) from Arabidopsis thaliana (Mouse-ear cress).